Here is a 571-residue protein sequence, read N- to C-terminus: Proline--tRNA ligase (571 aa).

It belongs to the class-II aminoacyl-tRNA synthetase family. ProS type 1 subfamily. In terms of assembly, homodimer.

The protein resides in the cytoplasm. The enzyme catalyses tRNA(Pro) + L-proline + ATP = L-prolyl-tRNA(Pro) + AMP + diphosphate. In terms of biological role, catalyzes the attachment of proline to tRNA(Pro) in a two-step reaction: proline is first activated by ATP to form Pro-AMP and then transferred to the acceptor end of tRNA(Pro). As ProRS can inadvertently accommodate and process non-cognate amino acids such as alanine and cysteine, to avoid such errors it has two additional distinct editing activities against alanine. One activity is designated as 'pretransfer' editing and involves the tRNA(Pro)-independent hydrolysis of activated Ala-AMP. The other activity is designated 'posttransfer' editing and involves deacylation of mischarged Ala-tRNA(Pro). The misacylated Cys-tRNA(Pro) is not edited by ProRS. This is Proline--tRNA ligase from Shewanella baltica (strain OS195).